The chain runs to 175 residues: NADH-ubiquinone oxidoreductase chain 6 (175 aa).

5 consecutive transmembrane segments (helical) span residues 1 to 21 (MMTYIVFILSIIFVVSFVGFS), 25 to 45 (SPIYGGLVLIISGAVGCGIVL), 47 to 67 (FGGSFLGLMVFLIYLGGMLVV), 88 to 108 (AVLGAFVMGLLSELLLACYIL), and 149 to 169 (YGTWLVIVTGWSLLTGVLVIM).

It belongs to the complex I subunit 6 family. In terms of assembly, core subunit of respiratory chain NADH dehydrogenase (Complex I) which is composed of 45 different subunits.

Its subcellular location is the mitochondrion inner membrane. It catalyses the reaction a ubiquinone + NADH + 5 H(+)(in) = a ubiquinol + NAD(+) + 4 H(+)(out). Functionally, core subunit of the mitochondrial membrane respiratory chain NADH dehydrogenase (Complex I) which catalyzes electron transfer from NADH through the respiratory chain, using ubiquinone as an electron acceptor. Essential for the catalytic activity and assembly of complex I. This Phoca vitulina (Harbor seal) protein is NADH-ubiquinone oxidoreductase chain 6 (MT-ND6).